Reading from the N-terminus, the 227-residue chain is 27 kDa A-type inclusion protein (227 aa).

Positions 4–210 (MPKQREMRRL…AECRRGNNGS (207 aa)) form a coiled coil.

This chain is 27 kDa A-type inclusion protein, found in Bos taurus (Bovine).